The following is a 424-amino-acid chain: Transcription regulator spe-44 (424 aa).

Residues 65–150 (PLQITIPEGD…RTHMEAMTID (86 aa)) enclose the SAND domain. Disordered stretches follow at residues 178–228 (ARKS…KPRQ) and 371–394 (EHSV…AREF). Residues 192 to 210 (YEIENEMAGKEADNDDNRK) show a composition bias toward basic and acidic residues. Residues 378-388 (PRTSSSSQESL) show a composition bias toward polar residues.

Its subcellular location is the chromosome. The protein localises to the nucleus. Its function is as follows. Transcription factor which controls spermatogenesis and sperm cell fate by regulation of sperm gene expression. The protein is Transcription regulator spe-44 of Caenorhabditis elegans.